Consider the following 482-residue polypeptide: Probable glycine dehydrogenase (decarboxylating) subunit 2 (482 aa).

Lysine 269 is subject to N6-(pyridoxal phosphate)lysine.

This sequence belongs to the GcvP family. C-terminal subunit subfamily. As to quaternary structure, the glycine cleavage system is composed of four proteins: P, T, L and H. In this organism, the P 'protein' is a heterodimer of two subunits. The cofactor is pyridoxal 5'-phosphate.

It carries out the reaction N(6)-[(R)-lipoyl]-L-lysyl-[glycine-cleavage complex H protein] + glycine + H(+) = N(6)-[(R)-S(8)-aminomethyldihydrolipoyl]-L-lysyl-[glycine-cleavage complex H protein] + CO2. Functionally, the glycine cleavage system catalyzes the degradation of glycine. The P protein binds the alpha-amino group of glycine through its pyridoxal phosphate cofactor; CO(2) is released and the remaining methylamine moiety is then transferred to the lipoamide cofactor of the H protein. This chain is Probable glycine dehydrogenase (decarboxylating) subunit 2, found in Pelodictyon phaeoclathratiforme (strain DSM 5477 / BU-1).